The chain runs to 359 residues: Palmitoyltransferase ERF2 (359 aa).

The tract at residues 1-21 (MALVSRRSTRSESTSITKEEH) is disordered. At 1-75 (MALVSRRSTR…RFRTVKGAKP (75 aa)) the chain is on the cytoplasmic side. A helical transmembrane segment spans residues 76–96 (LWLGVLLAIVCPMVLFSIFEA). Topologically, residues 97–104 (HKLWHTQN) are lumenal. A helical transmembrane segment spans residues 105-125 (GYKVLVIFFYYFWVITLASFI). The Cytoplasmic segment spans residues 126-217 (RTATSDPGVL…NCIGKRNYRF (92 aa)). Residues 173–223 (KYCPSCRIWRPPRSSHCSTCNVCVMVHDHHCIWVNNCIGKRNYRFFLIFLL) enclose the DHHC domain. Catalysis depends on cysteine 203, which acts as the S-palmitoyl cysteine intermediate. Residues 218–238 (FLIFLLGAILSSVILLTNCAI) form a helical membrane-spanning segment. Topologically, residues 239–250 (HIARESGGPRDC) are lumenal. Residues 251–271 (PVAILLLCYAGLTLWYPAILF) form a helical membrane-spanning segment. The Cytoplasmic portion of the chain corresponds to 272–359 (TYHIFMAGNQ…AHSFEKIQKI (88 aa)).

This sequence belongs to the DHHC palmitoyltransferase family. ERF2/ZDHHC9 subfamily. As to quaternary structure, interacts with SHR5. Post-translationally, autopalmitoylated.

The protein resides in the endoplasmic reticulum membrane. It catalyses the reaction L-cysteinyl-[protein] + hexadecanoyl-CoA = S-hexadecanoyl-L-cysteinyl-[protein] + CoA. In terms of biological role, the ERF2-SHR5 complex is a palmitoyltransferase specific for Ras proteins. Palmitoylates RAS2, which is required for its proper plasma membrane localization. This chain is Palmitoyltransferase ERF2 (ERF2), found in Saccharomyces cerevisiae (strain ATCC 204508 / S288c) (Baker's yeast).